We begin with the raw amino-acid sequence, 360 residues long: Photosystem II protein D1 (360 aa).

Transmembrane regions (helical) follow at residues Y29–T46, H118–L133, and W142–A156. Chlorophyll a is bound at residue H118. A pheophytin a-binding site is contributed by Y126. [CaMn4O5] cluster is bound by residues D170 and E189. A helical membrane pass occupies residues F197 to L218. Residue H198 coordinates chlorophyll a. A quinone-binding positions include H215 and S264–F265. A Fe cation-binding site is contributed by H215. Residue H272 participates in Fe cation binding. Residues F274–M288 form a helical membrane-spanning segment. H332, E333, D342, and A344 together coordinate [CaMn4O5] cluster. Residues S345 to G360 constitute a propeptide that is removed on maturation.

Belongs to the reaction center PufL/M/PsbA/D family. In terms of assembly, PSII is composed of 1 copy each of membrane proteins PsbA, PsbB, PsbC, PsbD, PsbE, PsbF, PsbH, PsbI, PsbJ, PsbK, PsbL, PsbM, PsbT, PsbX, PsbY, PsbZ, Psb30/Ycf12, peripheral proteins PsbO, CyanoQ (PsbQ), PsbU, PsbV and a large number of cofactors. It forms dimeric complexes. The D1/D2 heterodimer binds P680, chlorophylls that are the primary electron donor of PSII, and subsequent electron acceptors. It shares a non-heme iron and each subunit binds pheophytin, quinone, additional chlorophylls, carotenoids and lipids. D1 provides most of the ligands for the Mn4-Ca-O5 cluster of the oxygen-evolving complex (OEC). There is also a Cl(-1) ion associated with D1 and D2, which is required for oxygen evolution. The PSII complex binds additional chlorophylls, carotenoids and specific lipids. is required as a cofactor. Post-translationally, tyr-161 forms a radical intermediate that is referred to as redox-active TyrZ, YZ or Y-Z. In terms of processing, C-terminally processed by CtpA; processing is essential to allow assembly of the oxygen-evolving complex and thus photosynthetic growth.

Its subcellular location is the cellular thylakoid membrane. It carries out the reaction 2 a plastoquinone + 4 hnu + 2 H2O = 2 a plastoquinol + O2. In terms of biological role, photosystem II (PSII) is a light-driven water:plastoquinone oxidoreductase that uses light energy to abstract electrons from H(2)O, generating O(2) and a proton gradient subsequently used for ATP formation. It consists of a core antenna complex that captures photons, and an electron transfer chain that converts photonic excitation into a charge separation. The D1/D2 (PsbA/PsbD) reaction center heterodimer binds P680, the primary electron donor of PSII as well as several subsequent electron acceptors. The polypeptide is Photosystem II protein D1 (Microcystis aeruginosa (strain NIES-843 / IAM M-2473)).